Here is a 297-residue protein sequence, read N- to C-terminus: Acetyl-coenzyme A carboxylase carboxyl transferase subunit beta (297 aa).

The 270-residue stretch at 27-296 (LWHKCPSCEA…PEAAKEVAAV (270 aa)) folds into the CoA carboxyltransferase N-terminal domain. The Zn(2+) site is built by C31, C34, C50, and C53. A C4-type zinc finger spans residues 31–53 (CPSCEAVLYRPELEKTLDVCPKC).

The protein belongs to the AccD/PCCB family. In terms of assembly, acetyl-CoA carboxylase is a heterohexamer composed of biotin carboxyl carrier protein (AccB), biotin carboxylase (AccC) and two subunits each of ACCase subunit alpha (AccA) and ACCase subunit beta (AccD). Zn(2+) is required as a cofactor.

It is found in the cytoplasm. The catalysed reaction is N(6)-carboxybiotinyl-L-lysyl-[protein] + acetyl-CoA = N(6)-biotinyl-L-lysyl-[protein] + malonyl-CoA. Its pathway is lipid metabolism; malonyl-CoA biosynthesis; malonyl-CoA from acetyl-CoA: step 1/1. Its function is as follows. Component of the acetyl coenzyme A carboxylase (ACC) complex. Biotin carboxylase (BC) catalyzes the carboxylation of biotin on its carrier protein (BCCP) and then the CO(2) group is transferred by the transcarboxylase to acetyl-CoA to form malonyl-CoA. This chain is Acetyl-coenzyme A carboxylase carboxyl transferase subunit beta, found in Pseudomonas entomophila (strain L48).